The sequence spans 878 residues: Protein argonaute 6 (878 aa).

Residues Met1–Glu17 are compositionally biased toward low complexity. Residues Met1 to Asp25 form a disordered region. One can recognise a PAZ domain in the interval Pro259–Ser372. The region spanning Phe541–Lys851 is the Piwi domain.

Belongs to the argonaute family. Ago subfamily. In terms of tissue distribution, expressed in roots, cotyledons and shoot meristematic region.

Its subcellular location is the nucleus. In terms of biological role, involved in transcriptional gene silencing (TGS). Component of the RISC complex that associate with the small interfering RNA (siRNA) pathway involved in direct cytosine methylation at endogenous DNA repeats. Required for the accumulation of specific siRNAs derived from transgene and heterochromatin-related endogenous loci. Involved in RNA-directed DNA methylation (RdDM) at specific endogenous loci. Probably not required for the accumulation of siRNAs derived from transgene inverted repeats that induce post-transcriptional gene silencing (PTGS). Associates mainly with small RNAs of 24 nucleotide in length and preferentially recruits small RNAs with a 5' terminal adenosine. Targeted by turnip yellows virus (TuYV) protein P0 (via F-box-like domain) for probable proteasome degradation and thereby inactivating AGO6 function in RNA silencing. This Arabidopsis thaliana (Mouse-ear cress) protein is Protein argonaute 6 (AGO6).